Here is a 347-residue protein sequence, read N- to C-terminus: Indole-3-glycerol phosphate lyase, chloroplastic (347 aa).

2 disordered regions span residues 1–38 (MAFA…TPRR) and 64–89 (APPQ…RSRP). The N-terminal 53 residues, 1-53 (MAFAPKTSSSSSLSSALQAAQSPPLLLRRMSSTATPRRRYDAAVVVTTTTTAR), are a transit peptide targeting the chloroplast. Residues 8–27 (SSSSSLSSALQAAQSPPLLL) are compositionally biased toward low complexity. Residues 64–76 (APPQAPAPAPVPP) are compositionally biased toward pro residues.

The protein belongs to the TrpA family. Tetramer of two alpha and two beta chains for the tryptophan synthase activity. Homodimer of alpha chains for the indole-3-glycerol phosphate lyase activity.

It is found in the plastid. Its subcellular location is the chloroplast. It carries out the reaction (1S,2R)-1-C-(indol-3-yl)glycerol 3-phosphate = indole + D-glyceraldehyde 3-phosphate. The enzyme catalyses (1S,2R)-1-C-(indol-3-yl)glycerol 3-phosphate + L-serine = D-glyceraldehyde 3-phosphate + L-tryptophan + H2O. It participates in secondary metabolite biosynthesis; 2,4-dihydroxy-1,4-benzoxazin-3-one biosynthesis; 2,4-dihydroxy-1,4-benzoxazin-3-one from indoleglycerol phosphate: step 1/5. It functions in the pathway amino-acid biosynthesis; L-tryptophan biosynthesis; L-tryptophan from chorismate: step 5/5. Its function is as follows. The alpha subunit is responsible for the aldol cleavage of indoleglycerol phosphate to indole and glyceraldehyde 3-phosphate. In bacteria, tryptophan synthase alpha (TSA) activity is almost completely dependent on formation of an active alpha2beta2 complex with tryptophan synthase beta (TSB), and indole is usually not released during tryptophan synthesis. In maize, the TSA homolog BX1 catalyzes the formation of free indole from indole-3-glycerol phosphate, independently of TSB. The sequence is that of Indole-3-glycerol phosphate lyase, chloroplastic (BX1) from Zea mays (Maize).